Reading from the N-terminus, the 50-residue chain is Small ribosomal subunit protein uS14 (50 aa).

Cys15, Cys18, Cys33, and Cys36 together coordinate Zn(2+).

Belongs to the universal ribosomal protein uS14 family. Zinc-binding uS14 subfamily. As to quaternary structure, part of the 30S ribosomal subunit. Zn(2+) is required as a cofactor.

In terms of biological role, binds 16S rRNA, required for the assembly of 30S particles. The polypeptide is Small ribosomal subunit protein uS14 (Methanosarcina acetivorans (strain ATCC 35395 / DSM 2834 / JCM 12185 / C2A)).